A 449-amino-acid polypeptide reads, in one-letter code: Dynein axonemal assembly factor 3 (449 aa).

The protein belongs to the DNAAF3 family.

The protein localises to the cytoplasm. It localises to the dynein axonemal particle. Required for the assembly of axonemal inner and outer dynein arms. Involved in preassembly of dyneins into complexes before their transport into cilia. This Xenopus tropicalis (Western clawed frog) protein is Dynein axonemal assembly factor 3 (dnaaf3).